The following is a 335-amino-acid chain: Glycerol-3-phosphate dehydrogenase [NAD(P)+] (335 aa).

Ser10, Phe11, Arg31, and Lys105 together coordinate NADPH. Sn-glycerol 3-phosphate-binding residues include Lys105, Gly136, and Ser138. Position 140 (Ala140) interacts with NADPH. Lys191, Asp244, Ser254, Arg255, and Asn256 together coordinate sn-glycerol 3-phosphate. Lys191 functions as the Proton acceptor in the catalytic mechanism. An NADPH-binding site is contributed by Arg255. Residues Val279 and Glu281 each contribute to the NADPH site.

It belongs to the NAD-dependent glycerol-3-phosphate dehydrogenase family.

It is found in the cytoplasm. The catalysed reaction is sn-glycerol 3-phosphate + NAD(+) = dihydroxyacetone phosphate + NADH + H(+). It catalyses the reaction sn-glycerol 3-phosphate + NADP(+) = dihydroxyacetone phosphate + NADPH + H(+). It functions in the pathway membrane lipid metabolism; glycerophospholipid metabolism. Functionally, catalyzes the reduction of the glycolytic intermediate dihydroxyacetone phosphate (DHAP) to sn-glycerol 3-phosphate (G3P), the key precursor for phospholipid synthesis. The protein is Glycerol-3-phosphate dehydrogenase [NAD(P)+] of Myxococcus xanthus (strain DK1622).